A 400-amino-acid polypeptide reads, in one-letter code: Imidazolonepropionase (400 aa).

Positions 68 and 70 each coordinate Fe(3+). The Zn(2+) site is built by His68 and His70. 4-imidazolone-5-propanoate contacts are provided by Arg77, Tyr140, and His173. Tyr140 is an N-formimidoyl-L-glutamate binding site. Fe(3+) is bound at residue His238. Position 238 (His238) interacts with Zn(2+). Gln241 is a binding site for 4-imidazolone-5-propanoate. A Fe(3+)-binding site is contributed by Asp313. Asp313 lines the Zn(2+) pocket. Residues Asn315 and Gly317 each coordinate N-formimidoyl-L-glutamate. Residue Thr318 coordinates 4-imidazolone-5-propanoate.

This sequence belongs to the metallo-dependent hydrolases superfamily. HutI family. Zn(2+) is required as a cofactor. It depends on Fe(3+) as a cofactor.

The protein resides in the cytoplasm. The enzyme catalyses 4-imidazolone-5-propanoate + H2O = N-formimidoyl-L-glutamate. It functions in the pathway amino-acid degradation; L-histidine degradation into L-glutamate; N-formimidoyl-L-glutamate from L-histidine: step 3/3. Its function is as follows. Catalyzes the hydrolytic cleavage of the carbon-nitrogen bond in imidazolone-5-propanoate to yield N-formimidoyl-L-glutamate. It is the third step in the universal histidine degradation pathway. This chain is Imidazolonepropionase, found in Paracoccus denitrificans (strain Pd 1222).